The chain runs to 482 residues: Capsule synthesis positive regulator AcpB (482 aa).

2 consecutive PRD domains span residues 165-270 (PFEK…YKDI) and 283-395 (EGNL…YTSN).

Belongs to the AtxA/AcpA family.

Functionally, acpB and AcpA regulate cap gene expression and capsule synthesis. This is Capsule synthesis positive regulator AcpB (acpB) from Bacillus anthracis.